Consider the following 125-residue polypeptide: Small ribosomal subunit protein bS6 (125 aa).

The segment at 96–125 (VTAPSPMMREEKAKSAPQPAEEAKETTLAT) is disordered. Over residues 116 to 125 (EEAKETTLAT) the composition is skewed to basic and acidic residues.

Belongs to the bacterial ribosomal protein bS6 family.

Functionally, binds together with bS18 to 16S ribosomal RNA. The chain is Small ribosomal subunit protein bS6 from Nitrosospira multiformis (strain ATCC 25196 / NCIMB 11849 / C 71).